A 406-amino-acid polypeptide reads, in one-letter code: LIM/homeobox protein Lhx1 (406 aa).

LIM zinc-binding domains lie at 4-54 (CAGC…CKND) and 63-117 (CAGC…CKED). Disordered stretches follow at residues 128 to 187 (NSLH…RTTI) and 293 to 374 (YDFF…EVFG). The span at 137–148 (SDPSLSPDSQDP) shows a compositional bias: low complexity. Positions 151 to 167 (DDAKDSESANVSDKEAG) are enriched in basic and acidic residues. Position 162 is a phosphoserine (Ser-162). Positions 180–239 (RRGPRTTIKAKQLETLKAAFAATPKPTRHIREQLAQETGLNMRVIQVWFQNRRSKERRMK) form a DNA-binding region, homeobox. Residues 315–327 (PSSGPSGTPLGGL) show a composition bias toward low complexity. The span at 352–362 (GDSPSPEPSLP) shows a compositional bias: pro residues.

In terms of assembly, interacts with LDB1 via the tandem LIM domains. Expressed in the brain, thymus, and tonsils. Expressed in samples from patients with chronic myeloid leukemia (CML) and in 58% of acute myeloid leukemia (AML) cell lines.

The protein localises to the nucleus. Its function is as follows. Potential transcription factor. May play a role in early mesoderm formation and later in lateral mesoderm differentiation and neurogenesis. This Homo sapiens (Human) protein is LIM/homeobox protein Lhx1 (LHX1).